The sequence spans 694 residues: Polyphosphate kinase (694 aa).

An ATP-binding site is contributed by Asn-45. Residues Arg-367 and Arg-397 each coordinate Mg(2+). Residue His-427 is the Phosphohistidine intermediate of the active site. ATP contacts are provided by Tyr-460, Arg-553, and His-580.

Belongs to the polyphosphate kinase 1 (PPK1) family. The cofactor is Mg(2+). In terms of processing, an intermediate of this reaction is the autophosphorylated ppk in which a phosphate is covalently linked to a histidine residue through a N-P bond.

It catalyses the reaction [phosphate](n) + ATP = [phosphate](n+1) + ADP. Functionally, catalyzes the reversible transfer of the terminal phosphate of ATP to form a long-chain polyphosphate (polyP). In Campylobacter jejuni subsp. doylei (strain ATCC BAA-1458 / RM4099 / 269.97), this protein is Polyphosphate kinase.